The chain runs to 512 residues: Cytochrome P450 98A1 (512 aa).

Residues 3–23 (ASLLLSVALAVVLIPLSLALL) form a helical membrane-spanning segment. Residue C441 coordinates heme.

The protein belongs to the cytochrome P450 family. Requires heme as cofactor.

The protein localises to the membrane. The polypeptide is Cytochrome P450 98A1 (CYP98A1) (Sorghum bicolor (Sorghum)).